A 119-amino-acid chain; its full sequence is Large ribosomal subunit protein bL20 (119 aa).

Belongs to the bacterial ribosomal protein bL20 family.

Functionally, binds directly to 23S ribosomal RNA and is necessary for the in vitro assembly process of the 50S ribosomal subunit. It is not involved in the protein synthesizing functions of that subunit. In Treponema denticola (strain ATCC 35405 / DSM 14222 / CIP 103919 / JCM 8153 / KCTC 15104), this protein is Large ribosomal subunit protein bL20.